A 550-amino-acid polypeptide reads, in one-letter code: Chaperonin GroEL (550 aa).

ATP-binding positions include 30–33 (TLGP), K51, 87–91 (DGTTT), G415, 479–481 (NAA), and D495.

The protein belongs to the chaperonin (HSP60) family. As to quaternary structure, forms a cylinder of 14 subunits composed of two heptameric rings stacked back-to-back. Interacts with the co-chaperonin GroES.

It is found in the cytoplasm. The catalysed reaction is ATP + H2O + a folded polypeptide = ADP + phosphate + an unfolded polypeptide.. Functionally, together with its co-chaperonin GroES, plays an essential role in assisting protein folding. The GroEL-GroES system forms a nano-cage that allows encapsulation of the non-native substrate proteins and provides a physical environment optimized to promote and accelerate protein folding. The protein is Chaperonin GroEL of Burkholderia mallei (strain NCTC 10247).